Consider the following 92-residue polypeptide: Small ribosomal subunit protein uS19 (92 aa).

The protein belongs to the universal ribosomal protein uS19 family.

Its function is as follows. Protein S19 forms a complex with S13 that binds strongly to the 16S ribosomal RNA. The polypeptide is Small ribosomal subunit protein uS19 (Nitrobacter hamburgensis (strain DSM 10229 / NCIMB 13809 / X14)).